A 696-amino-acid chain; its full sequence is uncharacterized protein (696 aa).

One can recognise a GGDEF domain in the interval S293–E426. Positions R435–N689 constitute an EAL domain.

This is an uncharacterized protein from Synechocystis sp. (strain ATCC 27184 / PCC 6803 / Kazusa).